The chain runs to 376 residues: Homoserine dehydrogenase (376 aa).

The NADP(+) site is built by Asn17 and Ile18. An NAD(+)-binding site is contributed by Ile18. NADPH-binding residues include Ile18, Lys67, Thr99, and Lys123. NADP(+) is bound by residues Thr99 and Lys123. Residue Thr99 coordinates NAD(+). Residues Glu150, Val153, Ala155, and Leu157 each coordinate Na(+). Ser201 bears the Phosphoserine mark. Gly213 and Glu216 together coordinate NADP(+). 2 residues coordinate L-homoserine: Glu216 and Asp227. Lys231 functions as the Proton donor in the catalytic mechanism. Gly349 contributes to the NADP(+) binding site. Residue Gly349 coordinates NAD(+). Gly349 is an NADPH binding site.

It belongs to the homoserine dehydrogenase family. A metal cation is required as a cofactor.

It catalyses the reaction L-homoserine + NADP(+) = L-aspartate 4-semialdehyde + NADPH + H(+). The enzyme catalyses L-homoserine + NAD(+) = L-aspartate 4-semialdehyde + NADH + H(+). Its pathway is amino-acid biosynthesis; L-methionine biosynthesis via de novo pathway; L-homoserine from L-aspartate: step 3/3. It participates in amino-acid biosynthesis; L-threonine biosynthesis; L-threonine from L-aspartate: step 3/5. Catalyzes the conversion of L-aspartate-beta-semialdehyde (L-Asa) to L-homoserine (L-Hse), the third step in the biosynthesis of amino acids that derive from aspartate (the aspartate family of amino acids), including methioinine and threonine, the latter of which is a precursor to isoleucine; production of homoserine leads to a branch-point in the pathway as it can either be O-phosphorylated for processing to threonine, or O-acylated for processing to methionine. This Schizosaccharomyces pombe (strain 972 / ATCC 24843) (Fission yeast) protein is Homoserine dehydrogenase.